A 199-amino-acid polypeptide reads, in one-letter code: Imidazole glycerol phosphate synthase subunit HisH (199 aa).

The Glutamine amidotransferase type-1 domain maps to 3–199; it reads NITIIDTGCA…LKNFVEKVPF (197 aa). Residue Cys-78 is the Nucleophile of the active site. Catalysis depends on residues His-178 and Glu-180.

In terms of assembly, heterodimer of HisH and HisF.

It is found in the cytoplasm. It carries out the reaction 5-[(5-phospho-1-deoxy-D-ribulos-1-ylimino)methylamino]-1-(5-phospho-beta-D-ribosyl)imidazole-4-carboxamide + L-glutamine = D-erythro-1-(imidazol-4-yl)glycerol 3-phosphate + 5-amino-1-(5-phospho-beta-D-ribosyl)imidazole-4-carboxamide + L-glutamate + H(+). The enzyme catalyses L-glutamine + H2O = L-glutamate + NH4(+). Its pathway is amino-acid biosynthesis; L-histidine biosynthesis; L-histidine from 5-phospho-alpha-D-ribose 1-diphosphate: step 5/9. In terms of biological role, IGPS catalyzes the conversion of PRFAR and glutamine to IGP, AICAR and glutamate. The HisH subunit catalyzes the hydrolysis of glutamine to glutamate and ammonia as part of the synthesis of IGP and AICAR. The resulting ammonia molecule is channeled to the active site of HisF. This Haemophilus influenzae (strain 86-028NP) protein is Imidazole glycerol phosphate synthase subunit HisH.